Consider the following 684-residue polypeptide: Early phosphoprotein p84 (684 aa).

Disordered regions lie at residues 166–301 (LGGS…MSLP), 317–336 (SSAV…HHNA), 357–393 (VVSS…AAAT), 407–452 (RAPA…SPRF), and 569–657 (SNSS…GPSF). Residues 180–191 (EQQRRRQEQRHE) show a composition bias toward basic and acidic residues. The segment covering 201–220 (AGGGGGGGASGGGGGGGSGG) has biased composition (gly residues). 2 stretches are compositionally biased toward basic and acidic residues: residues 232–245 (RDPR…ERRP) and 258–272 (REAK…HEGH). The short motif at 261-264 (KRQK) is the Nuclear localization signal element. Residues 285 to 296 (GGAGGGGGGGSG) are compositionally biased toward gly residues. The span at 326 to 335 (NHHHHHHHHN) shows a compositional bias: basic residues. A compositionally biased stretch (low complexity) spans 359–377 (SSPSSTSPSSLLSLPRPSS). The span at 425-442 (STTPVSNCRVPPNSQESA) shows a compositional bias: polar residues. Residues 578–587 (PLPPPPPPPG) show a composition bias toward pro residues. Over residues 598 to 608 (RGGGGGGGGGR) the composition is skewed to gly residues. Positions 612 to 622 (RQAASSSSSSS) are enriched in low complexity.

This sequence belongs to the herpesviridae U79/UL112 family. In terms of assembly, isoforms 1, 2, 3 and 4 interacts with themselves and with each other via their shared N-terminal regions; these interactions are important to both their intranuclear targeting and the recruitment of UL44 to subnuclear sites for viral replication.

Its subcellular location is the host nucleus. The protein resides in the virion. Functionally, needed for efficient replication. Recruits the DNA polymerase processivity factor to pre-replication foci. This chain is Early phosphoprotein p84 (UL112/UL113), found in Homo sapiens (Human).